Here is a 491-residue protein sequence, read N- to C-terminus: Protein nucleotidyltransferase YdiU (491 aa).

ATP-binding residues include G92, G94, R95, K115, D127, G128, R178, and R185. The active-site Proton acceptor is D254. Positions 255 and 264 each coordinate Mg(2+). D264 provides a ligand contact to ATP.

The protein belongs to the SELO family. Requires Mg(2+) as cofactor. Mn(2+) serves as cofactor.

The enzyme catalyses L-seryl-[protein] + ATP = 3-O-(5'-adenylyl)-L-seryl-[protein] + diphosphate. It catalyses the reaction L-threonyl-[protein] + ATP = 3-O-(5'-adenylyl)-L-threonyl-[protein] + diphosphate. The catalysed reaction is L-tyrosyl-[protein] + ATP = O-(5'-adenylyl)-L-tyrosyl-[protein] + diphosphate. It carries out the reaction L-histidyl-[protein] + UTP = N(tele)-(5'-uridylyl)-L-histidyl-[protein] + diphosphate. The enzyme catalyses L-seryl-[protein] + UTP = O-(5'-uridylyl)-L-seryl-[protein] + diphosphate. It catalyses the reaction L-tyrosyl-[protein] + UTP = O-(5'-uridylyl)-L-tyrosyl-[protein] + diphosphate. Nucleotidyltransferase involved in the post-translational modification of proteins. It can catalyze the addition of adenosine monophosphate (AMP) or uridine monophosphate (UMP) to a protein, resulting in modifications known as AMPylation and UMPylation. The protein is Protein nucleotidyltransferase YdiU of Pseudarthrobacter chlorophenolicus (strain ATCC 700700 / DSM 12829 / CIP 107037 / JCM 12360 / KCTC 9906 / NCIMB 13794 / A6) (Arthrobacter chlorophenolicus).